The chain runs to 189 residues: Cytidylate kinase (189 aa).

7–15 (GPPGSGKTS) contacts ATP.

This sequence belongs to the cytidylate kinase family. Type 2 subfamily.

Its subcellular location is the cytoplasm. It catalyses the reaction CMP + ATP = CDP + ADP. The catalysed reaction is dCMP + ATP = dCDP + ADP. The sequence is that of Cytidylate kinase from Saccharolobus islandicus (strain L.S.2.15 / Lassen #1) (Sulfolobus islandicus).